Here is a 210-residue protein sequence, read N- to C-terminus: Late histone H1 (210 aa).

Disordered stretches follow at residues 1–21 (MSAA…HPPT) and 86–210 (SFKL…AAKK). Positions 17 to 91 (AHPPTSQMVV…GASGSFKLGK (75 aa)) constitute an H15 domain. A compositionally biased stretch (basic residues) spans 104–113 (AAAKKAKLAA). The span at 114–123 (KKKEQKEKKA) shows a compositional bias: basic and acidic residues. The segment covering 124–210 (AKTKARKEKL…KPAAKKAAKK (87 aa)) has biased composition (basic residues).

It belongs to the histone H1/H5 family.

It localises to the nucleus. The protein localises to the chromosome. Its function is as follows. Histones H1 are necessary for the condensation of nucleosome chains into higher-order structures. The sequence is that of Late histone H1 from Lytechinus pictus (Painted sea urchin).